Here is a 167-residue protein sequence, read N- to C-terminus: Epithelial membrane protein 2 (167 aa).

The helical transmembrane segment at 1–21 (MLVLLAFIIVFHITSAALLLV) threads the bilayer. Residues asparagine 44, asparagine 47, and asparagine 52 are each glycosylated (N-linked (GlcNAc...) asparagine). 3 helical membrane-spanning segments follow: residues 67-87 (TMIL…LQLF), 95-115 (FVLT…AASI), and 143-163 (FILA…YLIL).

Belongs to the PMP-22/EMP/MP20 family. Interacts with PTK2; regulates PTK2 activation and localization. Interacts with ITGB3; regulates the levels of the heterodimer ITGA5-ITGB3 integrin surface expression. Interacts with P2RX7 (via C-terminus). Interacts with ITGB1; the interaction may be direct or indirect and ITGB1 has a heterodimer form.

It localises to the golgi apparatus membrane. The protein resides in the cell membrane. The protein localises to the apical cell membrane. It is found in the membrane raft. Its subcellular location is the cytoplasm. It localises to the nucleus. The protein resides in the perinuclear region. Functionally, functions as a key regulator of cell membrane composition by regulating protein surface expression. Also, plays a role in regulation of processes including cell migration, cell proliferation, cell contraction and cell adhesion. Regulates transepithelial migration of neutrophils into the alveolar lumen, potentially via mediation of cell surface expression of adhesion markers and lipid raft formation. Negatively regulates caveolae formation by reducing CAV1 expression and CAV1 amount by increasing lysosomal degradation. Facilitates surface trafficking and the formation of lipid rafts bearing GPI-anchor proteins. Regulates surface expression of MHC1 and ICAM1 proteins increasing susceptibility to T-cell mediated cytotoxicity. Regulates the plasma membrane expression of the integrin heterodimers ITGA6-ITGB1, ITGA5-ITGB3 and ITGA5-ITGB1 resulting in modulation of cell-matrix adhesion. Also regulates many processes through PTK2. Regulates blood vessel endothelial cell migration and angiogenesis by regulating VEGF protein expression through PTK2 activation. Regulates cell migration and cell contraction through PTK2 and SRC activation. Regulates focal adhesion density, F-actin conformation and cell adhesion capacity through interaction with PTK2. Positively regulates cell proliferation. Plays a role during cell death and cell blebbing. Promotes angiogenesis and vasculogenesis through induction of VEGFA via a HIF1A-dependent pathway. Also plays a role in embryo implantation by regulating surface trafficking of integrin heterodimer ITGA5-ITGB3. Plays a role in placental angiogenesis and uterine natural killer cell regulation at the maternal-fetal placental interface, however not required in the maternal tissues for a viable pregnancy. Involved in the early stages of embryogenic development and cardiogenesis, potentially via regulation of epithelial-mesenchymal transition timing. May play a role in glomerular filtration. The sequence is that of Epithelial membrane protein 2 (EMP2) from Bos taurus (Bovine).